The following is a 97-amino-acid chain: Small ribosomal subunit protein bS20 (97 aa).

Belongs to the bacterial ribosomal protein bS20 family.

In terms of biological role, binds directly to 16S ribosomal RNA. In Prochlorococcus marinus subsp. pastoris (strain CCMP1986 / NIES-2087 / MED4), this protein is Small ribosomal subunit protein bS20.